The primary structure comprises 786 residues: Cyclin-F (786 aa).

Residues 20 to 28 (KRRIRRRPR) carry the Nuclear localization signal 1 motif. One can recognise an F-box domain in the interval 29 to 76 (NLTILSLPEDVLFHILKWLSVEDILAVRAVHSQLKDLVDNHASVWACA). The Cyclin N-terminal domain maps to 288–405 (QASQAVSKQQ…EIVSALEGKI (118 aa)). 4 short sequence motifs (d box) span residues 310–313 (RYIL), 343–346 (RRRL), 349–352 (RYRL), and 351–354 (RLQL). Disordered stretches follow at residues 564–593 (SPSGRRTKRKRENSLQEDRGSFVTTPTAEL) and 675–738 (TQIP…HTQP). A Nuclear localization signal 2 motif is present at residues 568–574 (RRTKRKR). Residues 582–766 (RGSFVTTPTA…ESSVPQQQVK (185 aa)) form a PEST region. The segment covering 697-714 (VTTSGYSSVSTASPTSSV) has biased composition (low complexity). The segment covering 723 to 738 (QPTSVLSLDSDSHTQP) has biased composition (polar residues). The D box 5 motif lies at 767 to 770 (RINL).

The protein belongs to the cyclin family. Cyclin AB subfamily. As to quaternary structure, component of the SCF(CCNF) complex consisting of CUL1, RBX1, SKP1 and CCNF. Interacts with SKP1. Interacts with CUL1. Interacts with CCNB1; interaction is required for nuclear localization of CCNB1. Interacts with CCP110; this interaction leads to CCP110 ubiquitination and degradation via the proteasome pathway. Interacts (via the Cyclin N-terminal domain) with MYBL2/BMYB. Interacts with FZR1/CDH1 (via N-terminus). Interacts with RRM2 (via Cy motif and when phosphorylated at 'Thr-33'); the interaction occurs exclusively in G2 and early M. Interacts with CDC6 (via Cy motif); the interaction takes place during G2 and M phase. Degraded when the spindle assembly checkpoint is activated during the G2-M transition. Degradation depends on the C-terminal PEST sequence. Post-translationally, phosphorylated just before cells enter into mitosis. In terms of processing, ubiquitinated by the anaphase-promoting complex (APC/C); leading to its degradation by the proteasome. Widely expressed, with expression detected in the heart, brain, placenta, lung, liver, skeletal muscle, kidney and pancreas.

Its subcellular location is the nucleus. The protein resides in the cytoplasm. The protein localises to the perinuclear region. It is found in the cytoskeleton. It localises to the microtubule organizing center. Its subcellular location is the centrosome. The protein resides in the centriole. In terms of biological role, substrate recognition component of a SCF (SKP1-CUL1-F-box protein) E3 ubiquitin-protein ligase complex which mediates the ubiquitination and subsequent proteasomal degradation of target proteins. The SCF(CCNF) E3 ubiquitin-protein ligase complex is an integral component of the ubiquitin proteasome system (UPS) and links proteasome degradation to the cell cycle. Mediates the substrate recognition and the proteasomal degradation of various target proteins involved in the regulation of cell cycle progression and in the maintenance of genome stability. Mediates the ubiquitination and proteasomal degradation of CP110 during G2 phase, thereby acting as an inhibitor of centrosome reduplication. In G2, mediates the ubiquitination and subsequent degradation of ribonucleotide reductase RRM2, thereby maintaining a balanced pool of dNTPs and genome integrity. In G2, mediates the ubiquitination and proteasomal degradation of CDC6, thereby suppressing DNA re-replication and preventing genome instability. Involved in the ubiquitination and degradation of the substrate adapter CDH1 of the anaphase-promoting complex (APC/C), thereby acting as an antagonist of APC/C in regulating G1 progression and S phase entry. May play a role in the G2 cell cycle checkpoint control after DNA damage, possibly by promoting the ubiquitination of MYBL2/BMYB. This Homo sapiens (Human) protein is Cyclin-F (CCNF).